We begin with the raw amino-acid sequence, 326 residues long: Transposase for insertion sequence element IS4351 (326 aa).

The Integrase catalytic domain maps to I156 to I317.

It belongs to the transposase IS30 family.

Required for the transposition of the insertion element. This chain is Transposase for insertion sequence element IS4351, found in Bacteroides fragilis.